Consider the following 133-residue polypeptide: Small ribosomal subunit protein eS8 (133 aa).

Positions 1-22 are disordered; sequence MGFYQGPDNRKITGGLKGKHRD.

Belongs to the eukaryotic ribosomal protein eS8 family. As to quaternary structure, part of the 30S ribosomal subunit.

This chain is Small ribosomal subunit protein eS8, found in Saccharolobus islandicus (strain M.14.25 / Kamchatka #1) (Sulfolobus islandicus).